The sequence spans 342 residues: Dihydroorotase (342 aa).

His13 and His15 together coordinate Zn(2+). Substrate contacts are provided by residues 15–17 (HLR) and Asn41. Zn(2+)-binding residues include Lys98, His135, and His173. Lys98 bears the N6-carboxylysine mark. Substrate is bound at residue His135. Leu218 lines the substrate pocket. Asp246 provides a ligand contact to Zn(2+). Asp246 is a catalytic residue. Substrate is bound by residues His250 and Ala262.

Belongs to the metallo-dependent hydrolases superfamily. DHOase family. Class II DHOase subfamily. Homodimer. Zn(2+) is required as a cofactor.

It catalyses the reaction (S)-dihydroorotate + H2O = N-carbamoyl-L-aspartate + H(+). The protein operates within pyrimidine metabolism; UMP biosynthesis via de novo pathway; (S)-dihydroorotate from bicarbonate: step 3/3. In terms of biological role, catalyzes the reversible cyclization of carbamoyl aspartate to dihydroorotate. This chain is Dihydroorotase, found in Photobacterium profundum (strain SS9).